The sequence spans 384 residues: Lipid-A-disaccharide synthase (384 aa).

It belongs to the LpxB family.

The catalysed reaction is a lipid X + a UDP-2-N,3-O-bis[(3R)-3-hydroxyacyl]-alpha-D-glucosamine = a lipid A disaccharide + UDP + H(+). Its pathway is bacterial outer membrane biogenesis; LPS lipid A biosynthesis. Functionally, condensation of UDP-2,3-diacylglucosamine and 2,3-diacylglucosamine-1-phosphate to form lipid A disaccharide, a precursor of lipid A, a phosphorylated glycolipid that anchors the lipopolysaccharide to the outer membrane of the cell. The sequence is that of Lipid-A-disaccharide synthase from Geobacter metallireducens (strain ATCC 53774 / DSM 7210 / GS-15).